The chain runs to 137 residues: MGVLSEFKAFAVKGNVVDMAVGIIIGAAFGKIVSSFVGDVIMPPIGLLIGGVDFSDLAITLKAAEGSAPAVVLAYGKFIQSVLDFVIVAFAIFMGVKAINRLKREEAVAPTLPPVPTKEEELLGEIRDLLKAQNNRP.

2 helical membrane-spanning segments follow: residues 9-29 (AFAV…GAAF) and 79-99 (IQSV…VKAI).

It belongs to the MscL family. Homopentamer.

It localises to the cell inner membrane. In terms of biological role, channel that opens in response to stretch forces in the membrane lipid bilayer. May participate in the regulation of osmotic pressure changes within the cell. The sequence is that of Large-conductance mechanosensitive channel from Pseudomonas fluorescens (strain Pf0-1).